The primary structure comprises 423 residues: Calcium up-regulated protein A (423 aa).

The segment covering 1 to 19 has biased composition (basic and acidic residues); it reads MINIEDISKSSNESEEKQL. Positions 1-27 are disordered; sequence MINIEDISKSSNESEEKQLKSTSTSSK. 2 consecutive Ricin B-type lectin domains span residues 27-147 and 118-251; these read KPKY…WTTF and QGNG…WGIN.

It belongs to the cup family.

It localises to the cytoplasm. The protein localises to the membrane. In terms of biological role, may play an important role in stabilizing and/or regulating the cell membrane during Ca(2+) stress or certain stages of development. The polypeptide is Calcium up-regulated protein A (cupA) (Dictyostelium discoideum (Social amoeba)).